A 652-amino-acid polypeptide reads, in one-letter code: MQGPLLLPGLCFLLSLFGAVTQKTKTSCAKCPPNASCVNNTHCTCNHGYTSGSGQKLFTFPLETCNDINECTPPYSVYCGFNAVCYNVEGSFYCQCVPGYRLHSGNEQFSNSNENTCQDTTSSKTTEGRKELQKIVDKFESLLTNQTLWRTEGRQEISSTATTILRDVESKVLETALKDPEQKVLKIQNDSVAIETQAITDNCSEERKTFNLNVQMNSMDIRCSDIIQGDTQGPSAIAFISYSSLGNIINATFFEEMDKKDQVYLNSQVVSAAIGPKRNVSLSKSVTLTFQHVKMTPSTKKVFCVYWKSTGQGSQWSRDGCFLIHVNKSHTMCNCSHLSSFAVLMALTSQEEDPVLTVITYVGLSVSLLCLLLAALTFLLCKAIRNTSTSLHLQLSLCLFLAHLLFLVGIDRTEPKVLCSIIAGALHYLYLAAFTWMLLEGVHLFLTARNLTVVNYSSINRLMKWIMFPVGYGVPAVTVAISAASWPHLYGTADRCWLHLDQGFMWSFLGPVCAIFSANLVLFILVFWILKRKLSSLNSEVSTIQNTRMLAFKATAQLFILGCTWCLGLLQVGPAAQVMAYLFTIINSLQGFFIFLVYCLLSQQVQKQYQKWFREIVKSKSESETYTLSSKMGPDSKPSEGDVFPGQVKRKY.

Residues 1-21 (MQGPLLLPGLCFLLSLFGAVT) form the signal peptide. Topologically, residues 22 to 357 (QKTKTSCAKC…TSQEEDPVLT (336 aa)) are extracellular. The EGF-like 1 domain maps to 24-66 (TKTSCAKCPPNASCVNNTHCTCNHGYTSGSGQKLFTFPLETCN). 6 disulfides stabilise this stretch: Cys28–Cys37, Cys31–Cys43, Cys45–Cys65, Cys71–Cys85, Cys79–Cys94, and Cys96–Cys117. Residues Asn34 and Asn39 are each glycosylated (N-linked (GlcNAc...) asparagine). The EGF-like 2; calcium-binding domain occupies 67–118 (DINECTPPYSVYCGFNAVCYNVEGSFYCQCVPGYRLHSGNEQFSNSNENTCQ). Asn145, Asn189, Asn202, Asn250, Asn279, Asn327, and Asn334 each carry an N-linked (GlcNAc...) asparagine glycan. One can recognise a GAIN-B domain in the interval 183 to 351 (KVLKIQNDSV…AVLMALTSQE (169 aa)). Disulfide bonds link Cys304/Cys333 and Cys321/Cys335. A GPS region spans residues 304–351 (CVYWKSTGQGSQWSRDGCFLIHVNKSHTMCNCSHLSSFAVLMALTSQE). A helical transmembrane segment spans residues 358-378 (VITYVGLSVSLLCLLLAALTF). Over 379-389 (LLCKAIRNTST) the chain is Cytoplasmic. Residues 390 to 410 (SLHLQLSLCLFLAHLLFLVGI) form a helical membrane-spanning segment. Topologically, residues 411-416 (DRTEPK) are extracellular. A helical transmembrane segment spans residues 417–437 (VLCSIIAGALHYLYLAAFTWM). The Cytoplasmic segment spans residues 438–464 (LLEGVHLFLTARNLTVVNYSSINRLMK). A helical membrane pass occupies residues 465 to 485 (WIMFPVGYGVPAVTVAISAAS). The Extracellular segment spans residues 486-508 (WPHLYGTADRCWLHLDQGFMWSF). The chain crosses the membrane as a helical span at residues 509–529 (LGPVCAIFSANLVLFILVFWI). Residues 530–557 (LKRKLSSLNSEVSTIQNTRMLAFKATAQ) are Cytoplasmic-facing. The chain crosses the membrane as a helical span at residues 558 to 578 (LFILGCTWCLGLLQVGPAAQV). Residues 579-580 (MA) are Extracellular-facing. A helical transmembrane segment spans residues 581-601 (YLFTIINSLQGFFIFLVYCLL). Topologically, residues 602–652 (SQQVQKQYQKWFREIVKSKSESETYTLSSKMGPDSKPSEGDVFPGQVKRKY) are cytoplasmic. A disordered region spans residues 621-652 (SESETYTLSSKMGPDSKPSEGDVFPGQVKRKY).

Belongs to the G-protein coupled receptor 2 family. Adhesion G-protein coupled receptor (ADGR) subfamily. In terms of assembly, forms a heterodimer, consisting of a large extracellular region (alpha subunit) non-covalently linked to a seven-transmembrane moiety (beta subunit). Proteolytically cleaved into 2 subunits, an extracellular alpha subunit and a seven-transmembrane subunit. In terms of tissue distribution, displays a predominantly leukocyte-restricted expression, with highest levels in neutrophils, monocytes and macrophages.

It is found in the cell membrane. The protein resides in the secreted. Functionally, orphan receptor that may play a role myeloid-myeloid interactions during immune and inflammatory responses. A ligand for the soluble form of this receptor is present at the surface of monocytes-derived macrophages and activated neutrophils. The chain is Adhesion G protein-coupled receptor E3 from Homo sapiens (Human).